The chain runs to 141 residues: Large ribosomal subunit protein uL11 (141 aa).

It belongs to the universal ribosomal protein uL11 family. Part of the ribosomal stalk of the 50S ribosomal subunit. Interacts with L10 and the large rRNA to form the base of the stalk. L10 forms an elongated spine to which L12 dimers bind in a sequential fashion forming a multimeric L10(L12)X complex. One or more lysine residues are methylated.

Forms part of the ribosomal stalk which helps the ribosome interact with GTP-bound translation factors. The polypeptide is Large ribosomal subunit protein uL11 (Nostoc sp. (strain PCC 7120 / SAG 25.82 / UTEX 2576)).